The following is a 160-amino-acid chain: Large ribosomal subunit protein uL22c (160 aa).

The protein belongs to the universal ribosomal protein uL22 family. In terms of assembly, part of the 50S ribosomal subunit.

The protein resides in the plastid. It is found in the chloroplast. This protein binds specifically to 23S rRNA. Functionally, the globular domain of the protein is located near the polypeptide exit tunnel on the outside of the subunit, while an extended beta-hairpin is found that lines the wall of the exit tunnel in the center of the 70S ribosome. The protein is Large ribosomal subunit protein uL22c (rpl22) of Nasturtium officinale (Watercress).